The following is a 389-amino-acid chain: Succinate--CoA ligase [ADP-forming] subunit beta (389 aa).

In terms of domain architecture, ATP-grasp spans 9 to 236 (KELFAKHGVP…RDATDPLELK (228 aa)). ATP-binding positions include lysine 45, 52–54 (GRG), serine 94, and glutamate 99. Asparagine 191 and aspartate 205 together coordinate Mg(2+). Substrate-binding positions include asparagine 256 and 318-320 (GIT).

The protein belongs to the succinate/malate CoA ligase beta subunit family. In terms of assembly, heterotetramer of two alpha and two beta subunits. It depends on Mg(2+) as a cofactor.

It catalyses the reaction succinate + ATP + CoA = succinyl-CoA + ADP + phosphate. It carries out the reaction GTP + succinate + CoA = succinyl-CoA + GDP + phosphate. The protein operates within carbohydrate metabolism; tricarboxylic acid cycle; succinate from succinyl-CoA (ligase route): step 1/1. Its function is as follows. Succinyl-CoA synthetase functions in the citric acid cycle (TCA), coupling the hydrolysis of succinyl-CoA to the synthesis of either ATP or GTP and thus represents the only step of substrate-level phosphorylation in the TCA. The beta subunit provides nucleotide specificity of the enzyme and binds the substrate succinate, while the binding sites for coenzyme A and phosphate are found in the alpha subunit. The protein is Succinate--CoA ligase [ADP-forming] subunit beta of Rhodococcus erythropolis (strain PR4 / NBRC 100887).